The following is a 508-amino-acid chain: General transcription factor IIF subunit 1 (508 aa).

A2 bears the N-acetylalanine mark. Residue T156 is modified to Phosphothreonine. The tract at residues 177–446 (MQQRRLKDQD…TPSSGDVQVT (270 aa)) is disordered. Phosphoserine is present on residues S217, S218, S221, and S224. Positions 232-251 (SKAKKKAPVTKAGRKKKKKK) are enriched in basic residues. Composition is skewed to acidic residues over residues 255-270 (DEAFEDSDDGDFEGQE) and 303-325 (EQSESSEESEEEKPPEEDKEEEE). Phosphothreonine is present on T331. Acidic residues predominate over residues 343 to 355 (DDSDSSEESDIDS). Positions 364–374 (AKKKTPPKRER) are enriched in basic residues. S377, S380, S381, and S385 each carry phosphoserine. Positions 378-388 (GGSSKGTSRPG) are enriched in polar residues. T389 carries the post-translational modification Phosphothreonine. Residues 389–406 (TPSAEAASTSSTLRAAAS) show a composition bias toward low complexity. S391 is subject to Phosphoserine. K407 is subject to N6-acetyllysine. A compositionally biased stretch (polar residues) spans 428-443 (GPQSLSGKSTPSSGDV). Phosphoserine occurs at positions 431, 433, and 436. T437 is modified (phosphothreonine). S440 is subject to Phosphoserine.

Belongs to the TFIIF alpha subunit family. In terms of assembly, heterodimer of an alpha and a beta subunit. Interacts with GTF2F2, CTDP1, TAF6/TAFII80 and URI1. Interacts with GTF2B (via C-terminus and preferentially via acetylated form); this interaction prevents binding of GTF2B to GTF2F2. Part of TBP-based Pol II pre-initiation complex (PIC), in which Pol II core assembles with general transcription factors and other specific initiation factors including GTF2E1, GTF2E2, GTF2F1, GTF2F2, TCEA1, ERCC2, ERCC3, GTF2H2, GTF2H3, GTF2H4, GTF2H5, GTF2A1, GTF2A2, GTF2B and TBP; this large multi-subunit PIC complex mediates DNA unwinding and targets Pol II core to the transcription start site where the first phosphodiester bond forms. In terms of processing, phosphorylated on Ser and other residues by TAF1 and casein kinase II-like kinases.

It localises to the nucleus. Its function is as follows. TFIIF is a general transcription initiation factor that binds to RNA polymerase II and helps to recruit it to the initiation complex in collaboration with TFIIB. It promotes transcription elongation. The sequence is that of General transcription factor IIF subunit 1 (Gtf2f1) from Mus musculus (Mouse).